Here is a 44-residue protein sequence, read N- to C-terminus: Opistoporin-2 (44 aa).

As to expression, expressed by the venom gland.

The protein resides in the secreted. It is found in the target cell membrane. At high concentrations, acts as a pore former in cellular membranes and causes the leakage of the cells. At submicromolar concentrations, degranulates granulocytes and has a weak hemolytic activity against human erythrocytes. Also strongly inhibits the production of superoxide anions. Has a strong antibacterial activity against Gram-negative bacteria but is less active against Gram-positive bacteria. Also has antifungal activity. This is Opistoporin-2 from Opistophthalmus carinatus (African yellow leg scorpion).